Here is a 200-residue protein sequence, read N- to C-terminus: Large ribosomal subunit protein bL25 (200 aa).

The protein belongs to the bacterial ribosomal protein bL25 family. CTC subfamily. As to quaternary structure, part of the 50S ribosomal subunit; part of the 5S rRNA/L5/L18/L25 subcomplex. Contacts the 5S rRNA. Binds to the 5S rRNA independently of L5 and L18.

This is one of the proteins that binds to the 5S RNA in the ribosome where it forms part of the central protuberance. This chain is Large ribosomal subunit protein bL25, found in Caldicellulosiruptor bescii (strain ATCC BAA-1888 / DSM 6725 / KCTC 15123 / Z-1320) (Anaerocellum thermophilum).